The primary structure comprises 488 residues: MELSLTTSIALATIVLILYKLATRPKSNKKRLPEASRLPIIGHMHHLIGTMPHRGVMELARKHGSLMHLQLGEVSTIVVSSPKWAKEILTTYDITFANRPETLTGEIIAYHNTDIVLAPYGEYWRQLRKLCTLELLSVKKVKSFQSIREEECWNLVKEVKESGSGKPISLSESIFKMIATILSRAAFGKGIKDQREFTEIVKEILRQTGGFDVADIFPSKKFLHHLSGKRARLTSIHKKLDTLINNIVAEHHVSTSSKANETLLDVLLRLKDSAEFPLTADNVKAIILDMFGAGTDTSSATVEWAISELIRCPRAMEKVQAELRQALNGKEQIHEEDIQDLPYLNLVIRETLRLHPPLPLVMPRECREPVNLAGYEIANKTKLIVNVFAINRDPEYWKDAEAFIPERFENNPNNIMGADYEYLPFGAGRRMCPGAALGLANVQLPLANILYHFNWKLPNGASHDQLDMTESFGATVQRKTELILVPSF.

Over 1-6 (MELSLT) the chain is Cytoplasmic. A helical; Signal-anchor for type II membrane protein transmembrane segment spans residues 7-23 (TSIALATIVLILYKLAT). Over 24–488 (RPKSNKKRLP…KTELILVPSF (465 aa)) the chain is Lumenal. Asn260 and Asn379 each carry an N-linked (GlcNAc...) asparagine glycan. Cys432 serves as a coordination point for heme.

This sequence belongs to the cytochrome P450 family. It depends on heme as a cofactor.

The protein resides in the endoplasmic reticulum membrane. The protein localises to the microsome membrane. It carries out the reaction (+)-(R)-germacrene A + 3 reduced [NADPH--hemoprotein reductase] + 3 O2 = germacra-1(10),4,11(13)-trien-12-oate + 3 oxidized [NADPH--hemoprotein reductase] + 4 H2O + 4 H(+). It participates in secondary metabolite biosynthesis; terpenoid biosynthesis. Its activity is regulated as follows. Inhibited by cytochrome C, miconazole, aminobenzotriazole, metyrapone and clotrimazole. Functionally, involved in the biosynthesis of germacrene-derived sesquiterpene lactones. Catalyzes three consecutive oxidations of germacrene A to produce germacrene A acid. Could also catalyze the three-step oxidation of non-natural substrate amorphadiene to artemisinic acid. Can use beta-elemene as substrate. The protein is Germacrene A hydroxylase of Cichorium intybus (Chicory).